Consider the following 582-residue polypeptide: ATP-dependent lipid A-core flippase (582 aa).

5 consecutive transmembrane segments (helical) span residues 16–36, 63–83, 153–173, 253–273, and 275–295; these read LWPM…ALIL, ILVW…VSGF, IIGL…ILVV, PLIQ…ASFP, and VMET…IALM. The ABC transmembrane type-1 domain maps to 28-310; sequence IVAAIALILN…LTNVNAQFQR (283 aa). In terms of domain architecture, ABC transporter spans 342–578; that stretch reads IAFDHVTFSY…QGVYAQLHQL (237 aa). 376–383 contributes to the ATP binding site; the sequence is GRSGSGKS.

Belongs to the ABC transporter superfamily. Lipid exporter (TC 3.A.1.106) family. In terms of assembly, homodimer.

It localises to the cell inner membrane. The enzyme catalyses ATP + H2O + lipid A-core oligosaccharideSide 1 = ADP + phosphate + lipid A-core oligosaccharideSide 2.. Its function is as follows. Involved in lipopolysaccharide (LPS) biosynthesis. Translocates lipid A-core from the inner to the outer leaflet of the inner membrane. Transmembrane domains (TMD) form a pore in the inner membrane and the ATP-binding domain (NBD) is responsible for energy generation. This is ATP-dependent lipid A-core flippase from Sodalis glossinidius (strain morsitans).